A 138-amino-acid polypeptide reads, in one-letter code: Large ribosomal subunit protein bL12c (138 aa).

It belongs to the bacterial ribosomal protein bL12 family. In terms of assembly, homodimer. Part of the ribosomal stalk of the 50S ribosomal subunit. Forms a multimeric L10(L12)X complex, where L10 forms an elongated spine to which 2 to 4 L12 dimers bind in a sequential fashion. Binds GTP-bound translation factors.

It is found in the plastid. Forms part of the ribosomal stalk which helps the ribosome interact with GTP-bound translation factors. Is thus essential for accurate translation. This chain is Large ribosomal subunit protein bL12c, found in Euglena longa (Euglenophycean alga).